Consider the following 461-residue polypeptide: Cysteine--tRNA ligase (461 aa).

C28 contacts Zn(2+). The 'HIGH' region motif lies at 30 to 40; the sequence is ITVYDLCHIGH. Residues C209, H234, and E238 each coordinate Zn(2+). Positions 266–270 match the 'KMSKS' region motif; that stretch reads KMSKS. K269 is an ATP binding site.

The protein belongs to the class-I aminoacyl-tRNA synthetase family. In terms of assembly, monomer. It depends on Zn(2+) as a cofactor.

The protein localises to the cytoplasm. It carries out the reaction tRNA(Cys) + L-cysteine + ATP = L-cysteinyl-tRNA(Cys) + AMP + diphosphate. This chain is Cysteine--tRNA ligase, found in Salmonella dublin (strain CT_02021853).